We begin with the raw amino-acid sequence, 605 residues long: Cell wall integrity and stress response component 4 (605 aa).

The signal sequence occupies residues Met1 to Ala26. The WSC domain occupies Thr27 to Leu110. Positions Ser151–Ser305 are disordered. N-linked (GlcNAc...) asparagine glycosylation is found at Asn340, Asn386, Asn389, and Asn398. A compositionally biased stretch (low complexity) spans Arg381–Lys399. The disordered stretch occupies residues Arg381–Lys404. A helical membrane pass occupies residues Ala415–Ile435. Residue Asn479 is glycosylated (N-linked (GlcNAc...) asparagine). Positions Gly494–Thr521 are disordered. The span at Met497 to Thr521 shows a compositional bias: polar residues. N-linked (GlcNAc...) asparagine glycosylation is found at Asn553 and Asn583.

The protein localises to the membrane. The sequence is that of Cell wall integrity and stress response component 4 (WSC4) from Saccharomyces cerevisiae (strain ATCC 204508 / S288c) (Baker's yeast).